The following is a 536-amino-acid chain: Lysosomal acid glucosylceramidase (536 aa).

The signal sequence occupies residues 1–39 (MELSSPSREECPRPQGRVGIMAASLMGLLLLQAASWASG). Disulfide bonds link C43/C55 and C57/C62. 3 N-linked (GlcNAc...) asparagine glycosylation sites follow: N58, N98, and N185. E274 acts as the Proton donor in catalysis. A glycan (N-linked (GlcNAc...) asparagine) is linked at N309. E379 (nucleophile) is an active-site residue. N501 is a glycosylation site (N-linked (GlcNAc...) asparagine).

Belongs to the glycosyl hydrolase 30 family. As to quaternary structure, interacts with saposin-C. Interacts with SCARB2. Interacts with TCP1. Interacts with GRN; this interaction prevents aggregation of GBA1-SCARB2 complex via interaction with HSPA1A upon stress.

It localises to the lysosome membrane. The catalysed reaction is a beta-D-glucosyl-(1&lt;-&gt;1')-N-acylsphing-4-enine + H2O = an N-acylsphing-4-enine + D-glucose. The enzyme catalyses a beta-D-galactosyl-(1&lt;-&gt;1')-N-acylsphing-4-enine + H2O = an N-acylsphing-4-enine + D-galactose. It carries out the reaction cholesteryl 3-beta-D-glucoside + H2O = cholesterol + D-glucose. It catalyses the reaction a beta-D-glucosyl-(1&lt;-&gt;1')-N-acylsphing-4-enine + cholesterol = cholesteryl 3-beta-D-glucoside + an N-acylsphing-4-enine. The catalysed reaction is beta-D-glucosyl-N-(9Z-octadecenoyl)-sphing-4E-enine + cholesterol = N-(9Z-octadecenoyl)-sphing-4-enine + cholesteryl 3-beta-D-glucoside. The enzyme catalyses beta-D-glucosyl-N-octanoylsphing-4E-enine + cholesterol = N-octanoylsphing-4-enine + cholesteryl 3-beta-D-glucoside. It carries out the reaction beta-D-glucosyl-N-dodecanoylsphing-4-enine + cholesterol = N-dodecanoylsphing-4-enine + cholesteryl 3-beta-D-glucoside. It catalyses the reaction beta-D-glucosyl-(1&lt;-&gt;1)-N-octadecanoylsphing-4-enine + cholesterol = N-octadecanoylsphing-4-enine + cholesteryl 3-beta-D-glucoside. The catalysed reaction is beta-D-glucosyl-(1&lt;-&gt;1')-N-(15Z-tetracosenoyl)-sphing-4-enine + cholesterol = N-(15Z-tetracosenoyl)-sphing-4-enine + cholesteryl 3-beta-D-glucoside. The enzyme catalyses a beta-D-galactosyl-(1&lt;-&gt;1')-N-acylsphing-4-enine + cholesterol = cholesteryl 3-beta-D-galactoside + an N-acylsphing-4-enine. It carries out the reaction 1-(beta-D-galactosyl)-N-dodecanoylsphing-4-enine + cholesterol = cholesteryl 3-beta-D-galactoside + N-dodecanoylsphing-4-enine. It catalyses the reaction a beta-D-xylosyl-(1&lt;-&gt;1')-N-acylsphing-4-enine + cholesterol = cholesteryl 3-beta-D-xyloside + an N-acylsphing-4-enine. The catalysed reaction is beta-D-xylosyl-(1&lt;-&gt;1')-N-(9Z-octadecenoyl)-sphing-4-enine + cholesterol = cholesteryl 3-beta-D-xyloside + N-(9Z-octadecenoyl)-sphing-4-enine. It participates in steroid metabolism; cholesterol metabolism. It functions in the pathway sphingolipid metabolism. Glucosylceramidase that catalyzes, within the lysosomal compartment, the hydrolysis of glucosylceramides/GlcCers (such as beta-D-glucosyl-(1&lt;-&gt;1')-N-acylsphing-4-enine) into free ceramides (such as N-acylsphing-4-enine) and glucose. Plays a central role in the degradation of complex lipids and the turnover of cellular membranes. Through the production of ceramides, participates in the PKC-activated salvage pathway of ceramide formation. Catalyzes the glucosylation of cholesterol, through a transglucosylation reaction where glucose is transferred from GlcCer to cholesterol. GlcCer containing mono-unsaturated fatty acids (such as beta-D-glucosyl-N-(9Z-octadecenoyl)-sphing-4-enine) are preferred as glucose donors for cholesterol glucosylation when compared with GlcCer containing same chain length of saturated fatty acids (such as beta-D-glucosyl-N-octadecanoyl-sphing-4-enine). Under specific conditions, may alternatively catalyze the reverse reaction, transferring glucose from cholesteryl 3-beta-D-glucoside to ceramide. Can also hydrolyze cholesteryl 3-beta-D-glucoside producing glucose and cholesterol. Catalyzes the hydrolysis of galactosylceramides/GalCers (such as beta-D-galactosyl-(1&lt;-&gt;1')-N-acylsphing-4-enine), as well as the transfer of galactose between GalCers and cholesterol in vitro, but with lower activity than with GlcCers. Contrary to GlcCer and GalCer, xylosylceramide/XylCer (such as beta-D-xyosyl-(1&lt;-&gt;1')-N-acylsphing-4-enine) is not a good substrate for hydrolysis, however it is a good xylose donor for transxylosylation activity to form cholesteryl 3-beta-D-xyloside. The sequence is that of Lysosomal acid glucosylceramidase (GBA1) from Sus scrofa (Pig).